A 78-amino-acid polypeptide reads, in one-letter code: Large ribosomal subunit protein uL24 (78 aa).

Belongs to the universal ribosomal protein uL24 family. Part of the 50S ribosomal subunit.

In terms of biological role, one of two assembly initiator proteins, it binds directly to the 5'-end of the 23S rRNA, where it nucleates assembly of the 50S subunit. One of the proteins that surrounds the polypeptide exit tunnel on the outside of the subunit. The protein is Large ribosomal subunit protein uL24 of Campylobacter curvus (strain 525.92).